Here is a 184-residue protein sequence, read N- to C-terminus: Outer-membrane lipoprotein carrier protein (184 aa).

Positions 1–19 are cleaved as a signal peptide; that stretch reads MRAFLKILMVLIFMSVAYA.

This sequence belongs to the LolA family. In terms of assembly, monomer.

Its subcellular location is the periplasm. Participates in the translocation of lipoproteins from the inner membrane to the outer membrane. Only forms a complex with a lipoprotein if the residue after the N-terminal Cys is not an aspartate (The Asp acts as a targeting signal to indicate that the lipoprotein should stay in the inner membrane). The polypeptide is Outer-membrane lipoprotein carrier protein (Helicobacter pylori (strain HPAG1)).